We begin with the raw amino-acid sequence, 811 residues long: Phenylalanine--tRNA ligase beta subunit (811 aa).

The tRNA-binding domain occupies 40 to 156 (AEKNENIVVG…EDIEVGSKVD (117 aa)). The B5 domain maps to 411–486 (KSTKEVKVPL…RIHGYDHLPY (76 aa)). Mg(2+)-binding residues include D464, D470, E473, and E474. The region spanning 717–810 (PRYPSVSRDI…VNKKFGSYVR (94 aa)) is the FDX-ACB domain.

It belongs to the phenylalanyl-tRNA synthetase beta subunit family. Type 1 subfamily. In terms of assembly, tetramer of two alpha and two beta subunits. Mg(2+) serves as cofactor.

The protein localises to the cytoplasm. The enzyme catalyses tRNA(Phe) + L-phenylalanine + ATP = L-phenylalanyl-tRNA(Phe) + AMP + diphosphate + H(+). The protein is Phenylalanine--tRNA ligase beta subunit of Oceanobacillus iheyensis (strain DSM 14371 / CIP 107618 / JCM 11309 / KCTC 3954 / HTE831).